The following is a 539-amino-acid chain: Efflux pump roqT (539 aa).

Residues 1–25 (MEKEVATDPLPQEIPSDAPDEGGSL) form a disordered region. 12 helical membrane-spanning segments follow: residues 36–56 (VSLT…VTII), 108–128 (LFLF…VGLI), 133–153 (IAGL…AQTV), 160–180 (VFTA…PPLG), 191–211 (WCFY…LFFF), 233–253 (IGSF…QWGG), 262–282 (RIIV…AVQI), 305–325 (WFAI…PIWF), 338–360 (VMNL…LVTI), 362–384 (GYYN…LLST), 395–415 (IGYQ…PFMV), and 502–522 (AFYV…ALEW).

Belongs to the major facilitator superfamily. TCR/Tet family.

It is found in the membrane. Functionally, efflux pump; part of the gene cluster that mediates the biosynthesis of the mycotoxins roquefortine C and meleagrin. This is Efflux pump roqT from Penicillium rubens (strain ATCC 28089 / DSM 1075 / NRRL 1951 / Wisconsin 54-1255) (Penicillium chrysogenum).